The following is a 101-amino-acid chain: NAD(P)H-quinone oxidoreductase subunit 4L, chloroplastic (101 aa).

The next 3 membrane-spanning stretches (helical) occupy residues 2 to 22 (MLEH…YGLI), 32 to 52 (MCLE…SDLF), and 61 to 81 (VFSI…PAIV).

Belongs to the complex I subunit 4L family. NDH is composed of at least 16 different subunits, 5 of which are encoded in the nucleus.

The protein localises to the plastid. The protein resides in the chloroplast thylakoid membrane. It catalyses the reaction a plastoquinone + NADH + (n+1) H(+)(in) = a plastoquinol + NAD(+) + n H(+)(out). The catalysed reaction is a plastoquinone + NADPH + (n+1) H(+)(in) = a plastoquinol + NADP(+) + n H(+)(out). Its function is as follows. NDH shuttles electrons from NAD(P)H:plastoquinone, via FMN and iron-sulfur (Fe-S) centers, to quinones in the photosynthetic chain and possibly in a chloroplast respiratory chain. The immediate electron acceptor for the enzyme in this species is believed to be plastoquinone. Couples the redox reaction to proton translocation, and thus conserves the redox energy in a proton gradient. This Nuphar advena (Common spatterdock) protein is NAD(P)H-quinone oxidoreductase subunit 4L, chloroplastic.